We begin with the raw amino-acid sequence, 238 residues long: Ribosomal RNA small subunit methyltransferase G (238 aa).

S-adenosyl-L-methionine-binding positions include G77, F82, 128–129, and R147; that span reads AE.

The protein belongs to the methyltransferase superfamily. RNA methyltransferase RsmG family.

The protein resides in the cytoplasm. Specifically methylates the N7 position of guanine in position 535 of 16S rRNA. This chain is Ribosomal RNA small subunit methyltransferase G, found in Exiguobacterium sp. (strain ATCC BAA-1283 / AT1b).